The sequence spans 203 residues: Ribosome maturation factor RimP (203 aa).

The segment covering 1 to 21 has biased composition (polar residues); the sequence is MSDSEATTSTDRSESNSTATI. Positions 1 to 23 are disordered; the sequence is MSDSEATTSTDRSESNSTATIHN.

Belongs to the RimP family.

Its subcellular location is the cytoplasm. Its function is as follows. Required for maturation of 30S ribosomal subunits. The sequence is that of Ribosome maturation factor RimP from Paenarthrobacter aurescens (strain TC1).